Reading from the N-terminus, the 452-residue chain is Phosphoglucosamine mutase (452 aa).

Ser-108 acts as the Phosphoserine intermediate in catalysis. Residues Ser-108, Asp-247, Asp-249, and Asp-251 each contribute to the Mg(2+) site. Phosphoserine is present on Ser-108.

This sequence belongs to the phosphohexose mutase family. It depends on Mg(2+) as a cofactor. Post-translationally, activated by phosphorylation.

The enzyme catalyses alpha-D-glucosamine 1-phosphate = D-glucosamine 6-phosphate. Catalyzes the conversion of glucosamine-6-phosphate to glucosamine-1-phosphate. This chain is Phosphoglucosamine mutase, found in Paraburkholderia phytofirmans (strain DSM 17436 / LMG 22146 / PsJN) (Burkholderia phytofirmans).